Consider the following 243-residue polypeptide: CR(VI) reductase (243 aa).

Belongs to the flavin oxidoreductase frp family. It depends on FMN as a cofactor.

The protein is CR(VI) reductase (chrR) of Pseudomonas sp. (strain G-1).